A 151-amino-acid chain; its full sequence is UPF0561 protein C2orf68 homolog (151 aa).

The tract at residues 1–89 (MEEEGEAQGR…TLKDEPNDNG (89 aa)) is disordered. Composition is skewed to basic and acidic residues over residues 32–46 (LARDDYDREVKQAKE) and 70–85 (RQREKAHTTETLKDEP).

It belongs to the UPF0561 family.

This Xenopus laevis (African clawed frog) protein is UPF0561 protein C2orf68 homolog.